The chain runs to 982 residues: Zinc finger and BTB domain-containing protein 4 (982 aa).

Positions 30-131 (CDVTLIAGDT…IYSARLALPG (102 aa)) constitute a BTB domain. A Glycyl lysine isopeptide (Lys-Gly) (interchain with G-Cter in SUMO2) cross-link involves residue K40. A disordered region spans residues 71–103 (TGGSAPSPATTTAASSSSSSPPPASPHSSSPPR). A compositionally biased stretch (low complexity) spans 74-89 (SAPSPATTTAASSSSS). Residues 165–324 (VPPAPTSMVT…CRYCEKVFAL (160 aa)) are interaction with CBFA2T3. The C2H2-type 1; atypical zinc finger occupies 210 to 232 (FPCPRCGKSFIHPKRLQTHEAQC). Residues 234–255 (RGSNTRGSAGLGPGVSGSGGPA) are disordered. A compositionally biased stretch (gly residues) spans 242 to 255 (AGLGPGVSGSGGPA). 3 C2H2-type zinc fingers span residues 285-307 (YVCAACERSYVTLSSLKRHSNVH), 313-335 (YPCRYCEKVFALAEYRTKHEVWH), and 341-364 (YQCIFCWDTFVTYYNLKTHQRAFH). S367 is subject to Phosphoserine. Residues 404–578 (KTYSQGAPEA…QLQAPPPLCQ (175 aa)) are disordered. Over residues 430-446 (SPQPLPPPAPEPGPPPS) the composition is skewed to pro residues. Gly residues predominate over residues 467-477 (AAGGGPAGTGG). 2 stretches are compositionally biased toward low complexity: residues 478-488 (SQAASVITYTT) and 507-529 (ATPTSPASTAVSPATAAGPATAT). Residue K548 forms a Glycyl lysine isopeptide (Lys-Gly) (interchain with G-Cter in SUMO2) linkage. Residues 552-565 (GLSGSGGSPTGTGR) are compositionally biased toward gly residues. K590 is covalently cross-linked (Glycyl lysine isopeptide (Lys-Gly) (interchain with G-Cter in SUMO2)). Residues 591–600 (RRISETDLRP) show a composition bias toward basic and acidic residues. Disordered regions lie at residues 591–700 (RRIS…ERRH), 715–738 (LRKHQEAHSGGSHTSRTGRRSSTR), 759–839 (QRHA…GGGS), and 854–880 (GGSREPSAGKGKPGNEGSLGASEGDRM). Positions 604 to 627 (SGEEVEESEEEEEEEEEEDQEEQE) are enriched in acidic residues. Positions 628-637 (ESKAGGEDQL) are enriched in basic and acidic residues. C2H2-type zinc fingers lie at residues 700-722 (HRCGDCAQAFATVRKLRKHQEAH) and 739-761 (FTCPHCAKVCKTAAALNRHGQRH). Residues T769 and T771 each carry the phosphothreonine; by HIPK2 modification. Over residues 799-820 (SSSSGEAGSGSAAAAEASESAS) the composition is skewed to low complexity. T953 carries the phosphothreonine; by HIPK2 modification.

Interacts with HIPK2. Interacts with CBFA2T3. Interacts with ZBTB38. Phosphorylated by HIPK2. This phosphorylation reduces stability and triggers ZBTB4 protein degradation in response to DNA damage. As to expression, expressed in adult and aged myogenic satellite cells.

The protein resides in the nucleus. Its subcellular location is the chromosome. Transcriptional repressor with bimodal DNA-binding specificity. Represses transcription in a methyl-CpG-dependent manner. Binds with a higher affinity to methylated CpG dinucleotides in the consensus sequence 5'-CGCG-3' but can also bind to the non-methylated consensus sequence 5'-CTGCNA-3' also known as the consensus kaiso binding site (KBS). Can also bind specifically to a single methyl-CpG pair and can bind hemimethylated DNA but with a lower affinity compared to methylated DNA. Plays a role in postnatal myogenesis, may be involved in the regulation of satellite cells self-renewal. The protein is Zinc finger and BTB domain-containing protein 4 (Zbtb4) of Mus musculus (Mouse).